Consider the following 661-residue polypeptide: SUMO-activating enzyme subunit 2 (661 aa).

Residues 29 to 34, aspartate 53, 61 to 64, lysine 77, and 122 to 127 contribute to the ATP site; these read GAGGIG, NLNR, and DNISAR. Zn(2+) is bound by residues cysteine 163 and cysteine 166. Cysteine 178 acts as the Glycyl thioester intermediate in catalysis. Zn(2+)-binding residues include cysteine 436 and cysteine 439. Positions 545-661 are disordered; that stretch reads KKQQQKEKDQ…SKKLKSNLQD (117 aa). Positions 548 to 563 are enriched in basic and acidic residues; the sequence is QQKEKDQKEGKTTTIE. 2 stretches are compositionally biased toward low complexity: residues 577–607 and 623–634; these read TSQT…NNNN and SSTTTSSATPSI.

Belongs to the ubiquitin-activating E1 family. As to quaternary structure, heterodimer of sae1 and sae2. The complex binds sumo via sae2.

It localises to the nucleus. It participates in protein modification; protein sumoylation. The dimeric enzyme acts as an E1 ligase for sumo. It mediates ATP-dependent activation of sumo and formation of a thioester with a conserved cysteine residue on sae2. This is SUMO-activating enzyme subunit 2 (uba2) from Dictyostelium discoideum (Social amoeba).